Here is a 767-residue protein sequence, read N- to C-terminus: Photosystem I P700 chlorophyll a apoprotein A1 (767 aa).

A disordered region spans residues 1 to 22 (MTISPPESGEKNKKVLEDPVKA). Residues 8–22 (SGEKNKKVLEDPVKA) are compositionally biased toward basic and acidic residues. The next 8 membrane-spanning stretches (helical) occupy residues 76-99 (IFSAHFGHLAIIFIWMSAAFFHGA), 162-185 (LMALAIGAVIMAALMLHGGIYHYH), 201-225 (LNHHIAGLVGLGSLAWAGHCIHIGA), 309-327 (IAHHHLAFGVIAIIGGHLY), 368-391 (RHAQLSVNLACLGSLSILISHHMY), 407-433 (LGLFTHHMWIGALFIVGAGAHAGIAMV), 455-477 (ALISHLNWVCMWLGFHSFGLYIH), and 558-576 (LMIHHIHAFQIHVTVLILL). 2 residues coordinate [4Fe-4S] cluster: Cys-600 and Cys-609. Transmembrane regions (helical) follow at residues 616 to 637 (HVFLALFWMYNCISIVIFHFSW) and 681 to 703 (ISMYGLMFLGAHFIWAFSLMFLF). His-692 is a divinylchlorophyll a' binding site. Divinyl chlorophyll a-binding residues include Met-700 and Tyr-708. Trp-709 provides a ligand contact to phylloquinone. A helical transmembrane segment spans residues 741–761 (AVGVAHFLLGGIATTWAFFHA).

This sequence belongs to the PsaA/PsaB family. As to quaternary structure, the PsaA/B heterodimer binds the P700 divinyl chlorophyll special pair and subsequent electron acceptors. PSI consists of a core antenna complex that captures photons, and an electron transfer chain that converts photonic excitation into a charge separation. The cyanobacterial PSI reaction center is composed of one copy each of PsaA,B,C,D,E,F,I,J,K,L,M and X, and forms trimeric complexes. PSI electron transfer chain: 5 divinyl chlorophyll a, 1 divinyl chlorophyll a', 2 phylloquinones and 3 4Fe-4S clusters. PSI core antenna: 90 divinyl chlorophyll a, 22 carotenoids, 3 phospholipids and 1 galactolipid. P700 is a divinyl chlorophyll a/divinyl chlorophyll a' dimer, A0 is one or more divinyl chlorophyll a, A1 is one or both phylloquinones and FX is a shared 4Fe-4S iron-sulfur center. is required as a cofactor.

The protein localises to the cellular thylakoid membrane. It carries out the reaction reduced [plastocyanin] + hnu + oxidized [2Fe-2S]-[ferredoxin] = oxidized [plastocyanin] + reduced [2Fe-2S]-[ferredoxin]. Its function is as follows. PsaA and PsaB bind P700, the primary electron donor of photosystem I (PSI), as well as the electron acceptors A0, A1 and FX. PSI is a plastocyanin/cytochrome c6-ferredoxin oxidoreductase, converting photonic excitation into a charge separation, which transfers an electron from the donor P700 chlorophyll pair to the spectroscopically characterized acceptors A0, A1, FX, FA and FB in turn. Oxidized P700 is reduced on the lumenal side of the thylakoid membrane by plastocyanin or cytochrome c6. This is Photosystem I P700 chlorophyll a apoprotein A1 from Prochlorococcus marinus (strain MIT 9312).